Here is a 499-residue protein sequence, read N- to C-terminus: Glucooligosaccharide oxidase (499 aa).

The N-terminal stretch at 1-25 (MVRIQELTAALSLASVVQASWIQKR) is a signal peptide. Cys31 and Cys80 are joined by a disulfide. The FAD-binding PCMH-type domain maps to 58 to 230 (VDYDPAAIAI…SEFEFNTFEA (173 aa)). Positions 95–155 (HSYGSYGFGG…GNRALSHGTC (61 aa)) form a cross-link, 6-(S-cysteinyl)-8alpha-(pros-histidyl)-FAD (His-Cys). Residues Tyr97, Thr154, and Arg270 each coordinate substrate. Residues Asn330 and Asn366 are each glycosylated (N-linked (GlcNAc...) asparagine). Residues Gln378 and Gln409 each coordinate substrate. Asn419 carries N-linked (GlcNAc...) asparagine glycosylation. Tyr454 serves as a coordination point for substrate. Tyr454 (proton acceptor) is an active-site residue.

The protein belongs to the oxygen-dependent FAD-linked oxidoreductase family. It depends on FAD as a cofactor. Post-translationally, the FAD cofactor is bound via a bicovalent 6-S-cysteinyl, 8alpha-N1-histidyl FAD linkage.

The protein localises to the secreted. It catalyses the reaction beta-lactose + O2 = lactobiono-1,5-lactone + H2O2. The catalysed reaction is D-cellobiose + O2 = D-cellobiono-1,5-lactone + H2O2. It carries out the reaction D-cellotriose + O2 = D-cellotriono-1,5-lactone + H2O2. The enzyme catalyses D-cellotetraose + O2 = D-cellotetraono-1,5-lactone + H2O2. It catalyses the reaction D-cellopentaose + O2 = D-cellopentaono-1,5-lactone + H2O2. The catalysed reaction is D-cellohexaose + O2 = D-cellohexaono-1,5-lactone + H2O2. Catalyzes the selective oxidation of C1 hydroxyl moieties on mono- and disaccharides with concomitant reduction of molecular oxygen to hydrogen peroxide. This results in the formation of the corresponding lactones, which typically undergo spontaneous hydrolysis. Glucooligosaccharide oxidase is able to oxidize the monosaccharide D-glucose as well as the disaccharides maltose, cellobiose, and lactose. In addition, it shows high selectivity for cello- and maltooligosaccharides, indicating that glucooligosaccharide oxidase prefers oligosaccharides with a beta-D-glucosyl unit on the reducing end and additional sugar units linked by alpha- or beta-1,4 glucosidic bonds. The sequence is that of Glucooligosaccharide oxidase (gluO) from Sarocladium strictum (Black bundle disease fungus).